Here is a 338-residue protein sequence, read N- to C-terminus: Anthranilate phosphoribosyltransferase (338 aa).

Residues Gly-80, 83–84, Thr-88, 90–93, 108–116, and Ser-120 each bind 5-phospho-alpha-D-ribose 1-diphosphate; these read GD, NIST, and KHGNRAVSS. Gly-80 contacts anthranilate. Ser-92 lines the Mg(2+) pocket. Anthranilate is bound at residue Asn-111. Arg-166 contributes to the anthranilate binding site. Positions 225 and 226 each coordinate Mg(2+).

Belongs to the anthranilate phosphoribosyltransferase family. In terms of assembly, homodimer. Requires Mg(2+) as cofactor.

It catalyses the reaction N-(5-phospho-beta-D-ribosyl)anthranilate + diphosphate = 5-phospho-alpha-D-ribose 1-diphosphate + anthranilate. Its pathway is amino-acid biosynthesis; L-tryptophan biosynthesis; L-tryptophan from chorismate: step 2/5. Functionally, catalyzes the transfer of the phosphoribosyl group of 5-phosphorylribose-1-pyrophosphate (PRPP) to anthranilate to yield N-(5'-phosphoribosyl)-anthranilate (PRA). The polypeptide is Anthranilate phosphoribosyltransferase (Thermoanaerobacter sp. (strain X514)).